A 561-amino-acid chain; its full sequence is uncharacterized protein (561 aa).

2 helical membrane passes run 29-49 (FIFNVGSLTPTTAVLGVKKII) and 80-100 (FLFHTVGFFPIYTSTIGAVVI).

The protein resides in the cell membrane. This is an uncharacterized protein from Mycoplasma pneumoniae (strain ATCC 29342 / M129 / Subtype 1) (Mycoplasmoides pneumoniae).